Consider the following 244-residue polypeptide: SPX domain-containing protein 6 (244 aa).

The 147-residue stretch at 1-147 folds into the SPX domain; the sequence is MKFGKLLKRQ…GGALAAPVAE (147 aa). The segment at 212–244 is disordered; that stretch reads GSSTHGRHSLPPLTLPDSDWLRSFQPPSPIPIQ.

This Oryza sativa subsp. indica (Rice) protein is SPX domain-containing protein 6 (SPX6).